A 178-amino-acid chain; its full sequence is Nascent polypeptide-associated complex subunit alpha (178 aa).

Positions 16-80 (PKNEKKAREL…AKVDDMNQRI (65 aa)) constitute an NAC-A/B domain. Residues 82 to 100 (EAQAQQAQQEALQKAAADA) are compositionally biased toward low complexity. The disordered stretch occupies residues 82 to 145 (EAQAQQAQQE…DETGLDPKDI (64 aa)). A compositionally biased stretch (basic and acidic residues) spans 101–126 (GKTEDKSPEAITADLEKASLGDKKAE). The span at 127 to 139 (DEEEDEGEIDETG) shows a compositional bias: acidic residues. In terms of domain architecture, UBA spans 140–178 (LDPKDIEIVVEQTQVSRAKAVKALRNHDGDMVNAIMDLS).

Belongs to the NAC-alpha family. Part of the nascent polypeptide-associated complex (NAC), consisting of EGD2 and EGD1. NAC associates with ribosomes via EGD1.

It is found in the cytoplasm. Its subcellular location is the nucleus. Component of the nascent polypeptide-associated complex (NAC), a dynamic component of the ribosomal exit tunnel, protecting the emerging polypeptides from interaction with other cytoplasmic proteins to ensure appropriate nascent protein targeting. The NAC complex also promotes mitochondrial protein import by enhancing productive ribosome interactions with the outer mitochondrial membrane and blocks the inappropriate interaction of ribosomes translating non-secretory nascent polypeptides with translocation sites in the membrane of the endoplasmic reticulum. EGD2 may also be involved in transcription regulation. This is Nascent polypeptide-associated complex subunit alpha (EGD2) from Candida albicans (strain SC5314 / ATCC MYA-2876) (Yeast).